We begin with the raw amino-acid sequence, 284 residues long: NAD/NADP-dependent indole-3-acetaldehyde reductase (284 aa).

Residue Asp49 participates in NADPH binding. Active-site proton donor residues include Tyr54 and His109. 10 residues coordinate NADPH: Ser143, Gln165, Leu196, Arg201, Thr239, Thr240, Thr241, Ser242, Lys243, and Arg246.

This sequence belongs to the aldo/keto reductase family. Monomer.

It is found in the cytoplasm. The protein resides in the nucleus. The enzyme catalyses indole-3-ethanol + NAD(+) = indole-3-acetaldehyde + NADH + H(+). It catalyses the reaction indole-3-ethanol + NADP(+) = indole-3-acetaldehyde + NADPH + H(+). This chain is NAD/NADP-dependent indole-3-acetaldehyde reductase, found in Schizosaccharomyces pombe (strain 972 / ATCC 24843) (Fission yeast).